Here is a 171-residue protein sequence, read N- to C-terminus: Endoribonuclease YbeY (171 aa).

H115, H119, and H125 together coordinate Zn(2+).

It belongs to the endoribonuclease YbeY family. The cofactor is Zn(2+).

It localises to the cytoplasm. Single strand-specific metallo-endoribonuclease involved in late-stage 70S ribosome quality control and in maturation of the 3' terminus of the 16S rRNA. In Tropheryma whipplei (strain TW08/27) (Whipple's bacillus), this protein is Endoribonuclease YbeY.